We begin with the raw amino-acid sequence, 182 residues long: Putative manganese efflux pump MntP (182 aa).

The next 6 membrane-spanning stretches (helical) occupy residues 6 to 26 (LIPL…VSLG), 37 to 57 (ILYI…IGMV), 71 to 91 (HFAG…SSIL), 101 to 121 (IGIS…SVGL), 131 to 151 (VITI…GLFI), and 162 to 182 (YGEI…LFPI).

This sequence belongs to the MntP (TC 9.B.29) family.

The protein resides in the cell membrane. Probably functions as a manganese efflux pump. This is Putative manganese efflux pump MntP from Bacillus cereus (strain AH187).